A 264-amino-acid chain; its full sequence is MGYLKKLALFISVIILGIFIIGCDSSSDTAEKAKEDSKEEQIKKSFAKTLDMYPIKNLEDLYDKEGYRDGEFKKGDKGTWTLLTSFSKSNKPGEIDDEGMVLYLNRNTKKATGYYFVNKIYDDISKNQNEKKYRVELKNNKIILLDNVEDEKLKQKIENFKFFSQYADFKDLKNYQDGSITTNENVPRYEAEYKLNNSDTNVKKLRDIYPITTKKAPILKLHIDGDIKGSSVGYKKIEYKFSKVKDQETTLRDYLNFGPSDEDS.

An N-terminal signal peptide occupies residues 1 to 22 (MGYLKKLALFISVIILGIFIIG). A lipid anchor (N-palmitoyl cysteine) is attached at Cys-23. A lipid anchor (S-diacylglycerol cysteine) is attached at Cys-23.

The protein belongs to the staphylococcal tandem lipoprotein family.

It localises to the cell membrane. This is an uncharacterized protein from Staphylococcus aureus (strain N315).